A 1193-amino-acid polypeptide reads, in one-letter code: K(+) efflux antiporter 1, chloroplastic (1193 aa).

Residues 1 to 49 constitute a chloroplast transit peptide; sequence MEYASTFQRPILFHGGDGASYCFPNRLISPKGISITSGDSKVHSCFRLR. Residues 50 to 585 are Stromal-facing; the sequence is RNVAQSGTLN…MIPHQEVNEE (536 aa). Residues 103–135 form a disordered region; the sequence is SLGNADSNDHRIGESSESSDETEATDLKDARVE. Residues 131-355 adopt a coiled-coil conformation; the sequence is DARVENDTDS…RAEKSLSISQ (225 aa). Lysine 168 is modified (N6-acetyllysine; by NSI). Residues 351–364 are compositionally biased toward polar residues; sequence LSISQTPEETQGQL. Disordered stretches follow at residues 351–372 and 421–474; these read LSIS…TSQE and QPYE…NSPK. Basic and acidic residues predominate over residues 439–465; that stretch reads KVVEADSEKPKINVQTKKQETQKDLPK. The helical transmembrane segment at 586–606 threads the bilayer; the sequence is EASLFDFLWLLLASVIFVPLF. Residues 607 to 612 are Chloroplast intermembrane-facing; it reads QKIPGG. The helical transmembrane segment at 613–633 threads the bilayer; that stretch reads SPVLGYLAAGILIGPYGLSII. The Stromal segment spans residues 634–640; sequence RNVHGTR. Residues 641–661 form a helical membrane-spanning segment; the sequence is AIAEFGVVFLLFNIGLELSVE. Residues 662-668 are Chloroplast intermembrane-facing; sequence RLSSMKK. The helical transmembrane segment at 669 to 689 threads the bilayer; sequence YVFGLGSAQVLVTAAVVGLLA. Topologically, residues 690-698 are stromal; it reads HYVAGQAGP. The helical transmembrane segment at 699–719 threads the bilayer; that stretch reads AAIVIGNGLALSSTAVVLQVL. Topologically, residues 720-733 are chloroplast intermembrane; sequence QERGESTSRHGRAS. The helical transmembrane segment at 734 to 754 threads the bilayer; the sequence is FSVLLFQDLAVVVLLILIPLI. Residues 755–766 are Stromal-facing; the sequence is SPNSSKGGIGFQ. A helical membrane pass occupies residues 767-787; it reads AIAEALGLAAVKAAVAITAII. Over 788 to 827 the chain is Chloroplast intermembrane; sequence AGGRLLLRPIYKQIAENRNAEIFSANTLLVILGTSLLTAR. Residues 828-848 traverse the membrane as a helical segment; it reads AGLSMALGAFLAGLLLAETEF. At 849-860 the chain is on the stromal side; it reads SLQVESDIAPYR. A helical membrane pass occupies residues 861-881; that stretch reads GLLLGLFFMTVGMSIDPKLLL. Over 882 to 883 the chain is Chloroplast intermembrane; that stretch reads SN. Residues 884–904 form a helical membrane-spanning segment; the sequence is FPVIVGTLGLLIVGKTMLVVI. The Stromal segment spans residues 905 to 912; sequence MGKLFGIS. Residues 913–933 form a helical membrane-spanning segment; sequence IISAIRVGLLLAPGGEFAFVA. Residues 934–948 are Chloroplast intermembrane-facing; sequence FGEAVNQGIMSPQLS. Residues 949–969 form a helical membrane-spanning segment; it reads SLLFLVVGISMAITPWLAAGG. The Stromal segment spans residues 970-1193; it reads QLIASRFELH…QIIEGGTVVI (224 aa). An RCK N-terminal domain is found at 995–1112; the sequence is QGHIIICGFG…EKAGATAVVP (118 aa). The disordered stretch occupies residues 1165–1184; the sequence is GYSRTSKPKPQPSDASGDNQ.

It belongs to the monovalent cation:proton antiporter 2 (CPA2) transporter (TC 2.A.37) family. KEA (TC 2.A.37.1) subfamily. Post-translationally, acetylated at Lys-168 by the stromal acetyltransferase enzyme NSI. As to expression, expressed in shoots and roots. Mainly localized to leaf veins, hypocotyls, mesophylls and guard cells. Accumulates at high levels in small and dividing plastids (at protein level).

It localises to the plastid. It is found in the chloroplast inner membrane. The enzyme catalyses K(+)(in) + H(+)(out) = K(+)(out) + H(+)(in). Its activity is regulated as follows. Repressed by sodium ions Na(+). Electroneutral K(+)/H(+) efflux antiporter involved in chloroplastic K(+) homeostasis and osmotic adjustment, especially during plastid division and thylakoid membrane formation. Collaboratively with KEA2, adjusts alkaline stromal pH upon light to dark transitions in plastids. Together with KEA2, critical for chloroplast development, including chloroplast RNA-metabolism (e.g. rRNA maturation, polysome loading and RNA-protein interactions) and plastid gene expression (PGE), ion homeostasis, and photosynthesis. Contributes, during early seedling development, to the regulation of photosynthesis and abscisic acid- (ABA-) mediated primary root growth in a sucrose-dependent manner. Involved in the regulation of reactive oxygen and nitrogen species (ROS and RNS) metabolism. Required in roots for rapid hyperosmotic-induced Ca(2+) responses and for osmo-sensory potentiation in hyperosmotic conditions. May counteract resilience to drought and salt stress, involving photorespiratory pathway and stomata closure. In Arabidopsis thaliana (Mouse-ear cress), this protein is K(+) efflux antiporter 1, chloroplastic.